Consider the following 956-residue polypeptide: Translation initiation factor IF-2 (956 aa).

The interval 33–370 is disordered; the sequence is SHASSVEEAD…PVTERKFHEL (338 aa). The segment covering 46 to 60 has biased composition (polar residues); sequence IASSFSAGVTKNVQA. A compositionally biased stretch (basic and acidic residues) spans 63 to 73; sequence AKDKQVAEQKA. Residues 76-100 are compositionally biased toward low complexity; it reads AKATTPQPAASKAAEKPAAATQEAS. Basic and acidic residues-rich tracts occupy residues 112-125, 134-143, and 179-192; these read FKAEREARAKEQVA, SNDRKSDYRQ, and NDGHRQAGNRDKNR. Residues 199–213 show a composition bias toward low complexity; sequence RQQDTGRQGQTQAGA. Composition is skewed to basic and acidic residues over residues 234-258 and 266-276; these read ARQRESRFREQEEAKRLEQQARQEA and QTEDKKHREAS. The segment covering 277–293 has biased composition (low complexity); the sequence is AKATESVASMAAASVAK. Residues 303-320 show a composition bias toward basic and acidic residues; that stretch reads NRPDKGHDRDHGLEDGQK. Residues 325 to 343 show a composition bias toward low complexity; that stretch reads SWNSQNQVRNQKNSNWNNN. Basic residues predominate over residues 344-354; it reads KKNKKGKHHKN. Residues 457 to 626 enclose the tr-type G domain; that stretch reads ERAPVVTIMG…LLVAEVEELK (170 aa). Positions 466-473 are G1; sequence GHVDHGKT. Residue 466-473 coordinates GTP; that stretch reads GHVDHGKT. Positions 491-495 are G2; sequence GITQH. The tract at residues 512–515 is G3; sequence DTPG. GTP contacts are provided by residues 512–516 and 566–569; these read DTPGH and NKID. The tract at residues 566-569 is G4; that stretch reads NKID. The tract at residues 602 to 604 is G5; sequence SAK.

It belongs to the TRAFAC class translation factor GTPase superfamily. Classic translation factor GTPase family. IF-2 subfamily.

It localises to the cytoplasm. Functionally, one of the essential components for the initiation of protein synthesis. Protects formylmethionyl-tRNA from spontaneous hydrolysis and promotes its binding to the 30S ribosomal subunits. Also involved in the hydrolysis of GTP during the formation of the 70S ribosomal complex. The sequence is that of Translation initiation factor IF-2 from Streptococcus equi subsp. equi (strain 4047).